The primary structure comprises 201 residues: Recombination protein RecR (201 aa).

The C4-type zinc-finger motif lies at 57–72 (CKYCSNFGNKDECDIC). The Toprim domain occupies 80–176 (TKLMIVTTNE…QIYRIGFGIP (97 aa)).

The protein belongs to the RecR family.

Its function is as follows. May play a role in DNA repair. It seems to be involved in an RecBC-independent recombinational process of DNA repair. It may act with RecF and RecO. This is Recombination protein RecR from Ureaplasma urealyticum serovar 10 (strain ATCC 33699 / Western).